The chain runs to 140 residues: Nucleoside diphosphate kinase (140 aa).

The ATP site is built by Lys11, Phe59, Arg87, Thr93, Arg104, and Asn114. The active-site Pros-phosphohistidine intermediate is the His117.

The protein belongs to the NDK family. Homotetramer. It depends on Mg(2+) as a cofactor.

It is found in the cytoplasm. It carries out the reaction a 2'-deoxyribonucleoside 5'-diphosphate + ATP = a 2'-deoxyribonucleoside 5'-triphosphate + ADP. It catalyses the reaction a ribonucleoside 5'-diphosphate + ATP = a ribonucleoside 5'-triphosphate + ADP. In terms of biological role, major role in the synthesis of nucleoside triphosphates other than ATP. The ATP gamma phosphate is transferred to the NDP beta phosphate via a ping-pong mechanism, using a phosphorylated active-site intermediate. The sequence is that of Nucleoside diphosphate kinase from Methylobacterium sp. (strain 4-46).